Reading from the N-terminus, the 432-residue chain is Amino-acid acetyltransferase (432 aa).

The region spanning 286–425 (ESLREATIED…ASLYNYQRNS (140 aa)) is the N-acetyltransferase domain.

The protein belongs to the acetyltransferase family. ArgA subfamily.

It localises to the cytoplasm. The enzyme catalyses L-glutamate + acetyl-CoA = N-acetyl-L-glutamate + CoA + H(+). It participates in amino-acid biosynthesis; L-arginine biosynthesis; N(2)-acetyl-L-ornithine from L-glutamate: step 1/4. This chain is Amino-acid acetyltransferase, found in Ectopseudomonas mendocina (strain ymp) (Pseudomonas mendocina).